The following is a 183-amino-acid chain: Large ribosomal subunit protein bL25 (183 aa).

It belongs to the bacterial ribosomal protein bL25 family. CTC subfamily. In terms of assembly, part of the 50S ribosomal subunit; part of the 5S rRNA/L5/L18/L25 subcomplex. Contacts the 5S rRNA. Binds to the 5S rRNA independently of L5 and L18.

Its function is as follows. This is one of the proteins that binds to the 5S RNA in the ribosome where it forms part of the central protuberance. This Desulfotalea psychrophila (strain LSv54 / DSM 12343) protein is Large ribosomal subunit protein bL25.